A 417-amino-acid chain; its full sequence is MAGDNPENKDASMLDVSDAASNTTINGKHSADSTNEASLAYTFSQMNVDNPNELEPQHPLRHKSSLIFNDDDDDEIPPYSNHAENGSGETFDSDDDIDASSSSSIDSNEGDIHDADMTGNTLQKMDYQPSQQPDSLQNQGFQQQQEQQQGTVEGKKGRAMMFPVDITWQQGGNKVYVTGSFTGWRKMIGLVPVPGQPGLMHVKLQLPPGTHRFRFIVDNELRFSDYLPTATDQMGNFVNYMEVSAPPDWGNEPQQHLAEKKANHVDDSKLSKRPMSARSRIALEIEKEPDDMGDGYTRFHDETPAKPNLEYTQDIPAVFTDPNVMEQYYLTLDQQQNNHQNMAWLTPPQLPPHLENVILNSYSNAQTDNTSGALPIPNHVILNHLATSSIKHNTLCVASIVRYKQKYVTQILYTPLQ.

The segment covering 1 to 12 has biased composition (basic and acidic residues); that stretch reads MAGDNPENKDAS. A disordered region spans residues 1 to 37; that stretch reads MAGDNPENKDASMLDVSDAASNTTINGKHSADSTNEA. S12, S21, S44, and S135 each carry phosphoserine. Residues 19-37 show a composition bias toward polar residues; that stretch reads AASNTTINGKHSADSTNEA. Disordered stretches follow at residues 64 to 155 and 250 to 269; these read SSLI…VEGK and GNEP…DDSK. A compositionally biased stretch (polar residues) spans 118 to 136; sequence TGNTLQKMDYQPSQQPDSL. The segment covering 137–149 has biased composition (low complexity); it reads QNQGFQQQQEQQQ. A kinase-interacting sequence (KIS); required for interaction with SNF1 region spans residues 152 to 342; sequence VEGKKGRAMM…DQQQNNHQNM (191 aa). Residues 257–269 show a composition bias toward basic and acidic residues; the sequence is LAEKKANHVDDSK. Phosphoserine is present on residues S276 and S279. The interval 343–417 is association with SNF1 kinase complex (ASC) domain; required for interaction with SNF4; that stretch reads AWLTPPQLPP…VTQILYTPLQ (75 aa).

Belongs to the 5'-AMP-activated protein kinase beta subunit family. In terms of assembly, component of the SNF1 kinase complex, a heterotrimeric complex composed of the catalytic alpha subunit SNF1, one of the three related beta subunits SIP1, SIP2 or GAL83, and the regulatory gamma subunit SNF4. The beta subunit serves as a bridge between the catalytic and the regulatory subunit. Interacts (via KIS domain) with SNF1. Interacts (via ASC domain) with SNF4. Interacts with REE1. Post-translationally, phosphorylated by SNF1 in vitro.

The protein localises to the cytoplasm. Its subcellular location is the nucleus. In terms of biological role, beta subunit of the SNF1 kinase complex, which is required for transcriptional, metabolic, and developmental adaptations in response to glucose limitation. Has a structural role, mediating heterotrimer formation, and a regulatory role, defining carbon source-regulated subcellular location and substrate specificity of the SNF1 kinase complex. Promotes the relocalization of the SNF1 kinase complex to the nucleus upon shift to nonfermentable carbon sources. This Saccharomyces cerevisiae (strain ATCC 204508 / S288c) (Baker's yeast) protein is SNF1 protein kinase subunit beta-3 (GAL83).